The primary structure comprises 3926 residues: Hybrid PKS-NRPS synthetase LUC5 (3926 aa).

The 432-residue stretch at 8 to 439 folds into the Ketosynthase family 3 (KS3) domain; the sequence is REPIAIVGTA…GTNAHAIIES (432 aa). Catalysis depends on for beta-ketoacyl synthase activity residues C181, H318, and H359. A malonyl-CoA:ACP transacylase (MAT) domain region spans residues 545 to 863; it reads VFTGQGAQWP…QGALTRNVHD (319 aa). Residues 932–1065 are N-terminal hotdog fold; the sequence is HPLLGTRSTE…GHLRVDFGSE (134 aa). Residues 932–1225 form a dehydratase (DH) domain region; the sequence is HPLLGTRSTE…GLTCTSLLRP (294 aa). A PKS/mFAS DH domain is found at 932–1228; it reads HPLLGTRSTE…CTSLLRPGPS (297 aa). The Proton acceptor; for dehydratase activity role is filled by H964. Residues 1081–1228 are C-terminal hotdog fold; that stretch reads LTSVNIERFY…CTSLLRPGPS (148 aa). The active-site Proton donor; for dehydratase activity is D1138. The segment at 1344-1572 is C-methyltransferase (CMeT) domain; sequence IRAVGENLTE…VNDFYDPSKY (229 aa). The segment at 2091–2265 is ketoreductase (KR) domain 1; it reads TYLLAGCTGG…AASVIHIGMI (175 aa). The 78-residue stretch at 2371–2448 folds into the Carrier 1 domain; the sequence is EMLEVVEEEF…EICSTAVASL (78 aa). The residue at position 2408 (S2408) is an O-(pantetheine 4'-phosphoryl)serine. Positions 2474–2506 are enriched in polar residues; the sequence is VSGNGSSSSRAPTEFNSSTLKSGAQSTQGTSVS. Residues 2474–2518 are disordered; the sequence is VSGNGSSSSRAPTEFNSSTLKSGAQSTQGTSVSGDKDTNSVDGSA. Over residues 2507-2518 the composition is skewed to basic and acidic residues; it reads GDKDTNSVDGSA. Positions 2525–2810 are condensation; it reads PLSFAQERIW…VNLLPLRFQL (286 aa). Residues 2979-3389 are adenylation; sequence DWVKRQPDAI…RIAGDSQIKL (411 aa). Residues 3501-3580 enclose the Carrier 2 domain; sequence ETLTTTQERL…GMAAKIDGST (80 aa). S3540 is subject to O-(pantetheine 4'-phosphoryl)serine. The interval 3619–3840 is thiolester reductase (TE) domain; it reads LTGATGFLGL…DFVPVEQVAD (222 aa).

This sequence in the C-terminal section; belongs to the NRP synthetase family.

It participates in mycotoxin biosynthesis. Hybrid PKS-NRPS synthetase; part of the gene cluster that mediates the biosynthesis of the mycotoxin lucilactaene and the lucilactaene-related compound NG-391 that act as cell cycle inhibitors with potent growth inhibitory activity against malarial parasites, moderate growth inhibitory activity against cancer cells, and no activity against bacteria and fungi. The hybrid PKS-NRPS synthetase LUC5 is responsible for the condensation of one acetyl-coenzyme A (CoA) unit with six malonyl-CoA units and the amide linkage of the arising heptaketide and homoserine, subsequently releasing the first intermediate prelucilactaene B, as an alcohol with an open ring structure. Lucilactaene and NG-391 lack the 7-methyl group present in fusarins which is inserted in fusarins by the C-methyltransferase (CMeT) domain of the fusarin synthetase FUS1, suggesting that the CMet domain of LUC5 does not methylate this position. Within the pathway, both the cytochrome P450 monooxygenase LUC2 and the hydrolase LUC6 function in parallel in modification of prelucilactaene B. LUC6 may catalyze the 2-pyrrolidone ring formation to form prelucilactaene C from prelucilactaene B, followed by C-15 hydroxylation by the same enzyme to give prelucilactaene D, which is then converted to prelucilactaene E by epoxidation, and finally to prelucilactaene F by cyclization. Prelucilactane D, prelucilactaene E, and prelucilactaene F can be converted to dihydrolucilactaene, NG391, and lucilactaene, respectively, via C-20 methyl group hydroxylation by the cytochrome P450 monooxygenase LUC2. However, LUC2, unlike FUS8 in fusarin C biosynthesis, is not enough for the full oxidation of the C-20 methyl group into carboxylic acid, which is a prerequisite for the final methylation step. The aldehyde dehydrogenase LUC3 is involved in the biosynthesis by further oxidation of the C-20 alcoholic analog prelucilactaene G into a carboxylic derivative. This unidentified carboxylic derivative may be converted to demethyllucilactaene. As the last step, the methyltransferase LUC1 methylates the hydroxyl group at C-21 of demethyllucilactaene to generate lucilactaene. The polypeptide is Hybrid PKS-NRPS synthetase LUC5 (Fusarium sp).